Here is a 270-residue protein sequence, read N- to C-terminus: Thiazole synthase (270 aa).

Lysine 111 acts as the Schiff-base intermediate with DXP in catalysis. 1-deoxy-D-xylulose 5-phosphate contacts are provided by residues glycine 172, 198 to 199, and 220 to 221; these read AG and NS. The disordered stretch occupies residues 249–270; sequence AGRLPTRAQASPSSPTTGKVND. Positions 256 to 270 are enriched in polar residues; it reads AQASPSSPTTGKVND.

This sequence belongs to the ThiG family. Homotetramer. Forms heterodimers with either ThiH or ThiS.

The protein localises to the cytoplasm. It carries out the reaction [ThiS sulfur-carrier protein]-C-terminal-Gly-aminoethanethioate + 2-iminoacetate + 1-deoxy-D-xylulose 5-phosphate = [ThiS sulfur-carrier protein]-C-terminal Gly-Gly + 2-[(2R,5Z)-2-carboxy-4-methylthiazol-5(2H)-ylidene]ethyl phosphate + 2 H2O + H(+). It participates in cofactor biosynthesis; thiamine diphosphate biosynthesis. In terms of biological role, catalyzes the rearrangement of 1-deoxy-D-xylulose 5-phosphate (DXP) to produce the thiazole phosphate moiety of thiamine. Sulfur is provided by the thiocarboxylate moiety of the carrier protein ThiS. In vitro, sulfur can be provided by H(2)S. The sequence is that of Thiazole synthase from Synechococcus sp. (strain WH7803).